The chain runs to 1025 residues: DNA ligase 4 (1025 aa).

The segment at 1 to 36 (MMQPTPAPSSAPGSPQRTQAEPEMETPSYPQPPQNV) is disordered. Glu289, Lys291, Leu292, Arg296, Glu349, Phe387, Glu447, Lys452, Lys469, and Lys471 together coordinate ATP. The active-site N6-AMP-lysine intermediate is the Lys291. Glu349 provides a ligand contact to Mg(2+). Residue Glu447 coordinates Mg(2+). Residues 667 to 763 (VKTDIFNGMK…EPAPFKKKYF (97 aa)) form the BRCT 1 domain. The disordered stretch occupies residues 773–904 (ADEYNEDDGE…TTPDVDGDVK (132 aa)). 2 stretches are compositionally biased toward acidic residues: residues 775 to 785 (EYNEDDGEEEG) and 806 to 816 (SETEDEDEEQA). The segment covering 817-838 (PEIKEEQDGELHEWLKVDDRKS) has biased composition (basic and acidic residues). Residues 845–870 (DEEDSVTEDDSDNADVADEEEPDLDD) show a composition bias toward acidic residues. A compositionally biased stretch (basic and acidic residues) spans 891-904 (RHRETTPDVDGDVK). Positions 915 to 1025 (DPDVIFKHLC…TLLDEEEFAP (111 aa)) constitute a BRCT 2 domain.

It belongs to the ATP-dependent DNA ligase family. Mg(2+) is required as a cofactor.

Its subcellular location is the nucleus. It catalyses the reaction ATP + (deoxyribonucleotide)n-3'-hydroxyl + 5'-phospho-(deoxyribonucleotide)m = (deoxyribonucleotide)n+m + AMP + diphosphate.. Its function is as follows. DNA ligase involved in DNA non-homologous end joining (NHEJ); required for double-strand break (DSB) repair. The protein is DNA ligase 4 (LIG4) of Coprinopsis cinerea (Inky cap fungus).